The sequence spans 142 residues: ATP synthase epsilon chain (142 aa).

It belongs to the ATPase epsilon chain family. F-type ATPases have 2 components, CF(1) - the catalytic core - and CF(0) - the membrane proton channel. CF(1) has five subunits: alpha(3), beta(3), gamma(1), delta(1), epsilon(1). CF(0) has three main subunits: a, b and c.

It is found in the cell inner membrane. Produces ATP from ADP in the presence of a proton gradient across the membrane. This Shewanella putrefaciens (strain CN-32 / ATCC BAA-453) protein is ATP synthase epsilon chain.